A 597-amino-acid polypeptide reads, in one-letter code: Elongation factor 4 (597 aa).

Positions 2 to 184 (QNIRNFSIIA…DIVKKIPAPE (183 aa)) constitute a tr-type G domain. Residues 14–19 (DHGKST) and 131–134 (NKID) contribute to the GTP site.

This sequence belongs to the TRAFAC class translation factor GTPase superfamily. Classic translation factor GTPase family. LepA subfamily.

The protein localises to the cell inner membrane. The catalysed reaction is GTP + H2O = GDP + phosphate + H(+). Functionally, required for accurate and efficient protein synthesis under certain stress conditions. May act as a fidelity factor of the translation reaction, by catalyzing a one-codon backward translocation of tRNAs on improperly translocated ribosomes. Back-translocation proceeds from a post-translocation (POST) complex to a pre-translocation (PRE) complex, thus giving elongation factor G a second chance to translocate the tRNAs correctly. Binds to ribosomes in a GTP-dependent manner. The chain is Elongation factor 4 from Haemophilus ducreyi (strain 35000HP / ATCC 700724).